The chain runs to 316 residues: MSQCNSSYSVTRENLKYFAQFVYLVPGVLFQLRILIVIWGTHNKIYLKSSFFTIWSLDSLVSLVQMFLDVSFTRIHIYFPQLCEGFSVFLEIHWMIPNIVYPFYLYAFTAKSVIHSFLSINRASCVLMPTKYAYIWRSHMKKVIVFILLYPFLLLWNVIISEKYLDFIFGGFVISYIKRVPWASLSKFQIISYVFTFSVTLVTNSITLSKMAKLKKRLLMAERHLCVATAWISSGFVISLIAQAHFAFFRGDHELVEIFYIIQCVSFDLLNVGSPIVMITLSRELRNHVFLINPSPVVSRSTSTFNNKNNISILIQ.

A run of 7 helical transmembrane segments spans residues 21–41 (FVYL…IWGT), 50–70 (SFFT…FLDV), 99–121 (IVYP…LSIN), 140–160 (MKKV…NVII), 188–208 (FQII…SITL), 229–249 (TAWI…FAFF), and 258–278 (IFYI…PIVM).

This sequence belongs to the nematode receptor-like protein srg family.

The protein resides in the membrane. This Caenorhabditis elegans protein is Serpentine receptor class gamma-4 (srg-4).